The following is a 427-amino-acid chain: MAVLAALLRSGARSRSPLLRRLVQEIRYVERSYVSKPTLKEVVIVSATRTPIGSFLGSLSLLPATKLGSIAIQGAIEKAGIPKEEVKEAYMGNVLQGGEGQAPTRQAVLGAGLPISTPCTTINKVCASGMKAIMMASQSLMCGHQDVMVAGGMESMSNVPYVMNRGSTPYGGVKLEDLIVKDGLTDVYNKIHMGSCAENTAKKLNIARNEQDAYAINSYTRSKAAWEAGKFGNEVIPVTVTVKGQPDVVVKEDEEYKRVDFSKVPKLKTVFQKENGTVTAANASTLNDGAAALVLMTADAAKRLNVTPLARIVAFADAAVEPIDFPIAPVYAASMVLKDVGLKKEDIAMWEVNEAFSLVVLANIKMLEIDPQKVNINGGAVSLGHPIGMSGARIVGHLTHALKQGEYGLASICNGGGGASAMLIQKL.

The N-terminal 33 residues, 1–33 (MAVLAALLRSGARSRSPLLRRLVQEIRYVERSY), are a transit peptide targeting the mitochondrion. K66 bears the N6-acetyllysine; alternate mark. The residue at position 66 (K66) is an N6-succinyllysine; alternate. K78 carries the N6-succinyllysine modification. C126 acts as the Acyl-thioester intermediate in catalysis. Residues K174, K181, K190, and K202 each carry the N6-acetyllysine; alternate modification. 4 positions are modified to N6-succinyllysine; alternate: K174, K181, K190, and K202. Y219 provides a ligand contact to CoA. Residue Y219 coordinates K(+). Residues K223 and K230 each carry the N6-acetyllysine; alternate modification. N6-succinyllysine; alternate occurs at positions 223 and 230. Position 243 is an N6-succinyllysine (K243). N6-acetyllysine occurs at positions 251 and 257. CoA is bound by residues 258-260 (RVD) and K263. K263 carries the post-translational modification N6-acetyllysine; alternate. Residue K263 is modified to N6-succinyllysine; alternate. N6-succinyllysine is present on residues K266 and K268. N6-acetyllysine is present on K273. Positions 280, 281, and 283 each coordinate K(+). A CoA-binding site is contributed by S284. K338 is modified (N6-acetyllysine). V381 serves as a coordination point for K(+). C413 acts as the Proton donor/acceptor in catalysis.

It belongs to the thiolase-like superfamily. Thiolase family. In terms of assembly, homotetramer. In terms of processing, succinylation at Lys-268, adjacent to a coenzyme A binding site. Desuccinylated by SIRT5.

It is found in the mitochondrion. It catalyses the reaction 2 acetyl-CoA = acetoacetyl-CoA + CoA. It carries out the reaction propanoyl-CoA + acetyl-CoA = 2-methyl-3-oxobutanoyl-CoA + CoA. The protein operates within lipid metabolism; fatty acid beta-oxidation. Its activity is regulated as follows. Activated by potassium ions, but not sodium ions. This is one of the enzymes that catalyzes the last step of the mitochondrial beta-oxidation pathway, an aerobic process breaking down fatty acids into acetyl-CoA. Using free coenzyme A/CoA, catalyzes the thiolytic cleavage of medium- to long-chain 3-oxoacyl-CoAs into acetyl-CoA and a fatty acyl-CoA shortened by two carbon atoms. The activity of the enzyme is reversible and it can also catalyze the condensation of two acetyl-CoA molecules into acetoacetyl-CoA. Thereby, it plays a major role in ketone body metabolism. The polypeptide is Acetyl-CoA acetyltransferase, mitochondrial (ACAT1) (Homo sapiens (Human)).